A 244-amino-acid polypeptide reads, in one-letter code: Phosphatidylserine decarboxylase proenzyme (244 aa).

Catalysis depends on S212, which acts as the Schiff-base intermediate with substrate; via pyruvic acid. S212 carries the post-translational modification Pyruvic acid (Ser); by autocatalysis.

Belongs to the phosphatidylserine decarboxylase family. PSD-A subfamily. In terms of assembly, heterodimer of a large membrane-associated beta subunit and a small pyruvoyl-containing alpha subunit. Pyruvate is required as a cofactor. Is synthesized initially as an inactive proenzyme. Formation of the active enzyme involves a self-maturation process in which the active site pyruvoyl group is generated from an internal serine residue via an autocatalytic post-translational modification. Two non-identical subunits are generated from the proenzyme in this reaction, and the pyruvate is formed at the N-terminus of the alpha chain, which is derived from the carboxyl end of the proenzyme. The post-translation cleavage follows an unusual pathway, termed non-hydrolytic serinolysis, in which the side chain hydroxyl group of the serine supplies its oxygen atom to form the C-terminus of the beta chain, while the remainder of the serine residue undergoes an oxidative deamination to produce ammonia and the pyruvoyl prosthetic group on the alpha chain.

It localises to the cell membrane. It carries out the reaction a 1,2-diacyl-sn-glycero-3-phospho-L-serine + H(+) = a 1,2-diacyl-sn-glycero-3-phosphoethanolamine + CO2. It participates in phospholipid metabolism; phosphatidylethanolamine biosynthesis; phosphatidylethanolamine from CDP-diacylglycerol: step 2/2. Its function is as follows. Catalyzes the formation of phosphatidylethanolamine (PtdEtn) from phosphatidylserine (PtdSer). In Granulibacter bethesdensis (strain ATCC BAA-1260 / CGDNIH1), this protein is Phosphatidylserine decarboxylase proenzyme.